The following is a 385-amino-acid chain: U6 small nuclear RNA (adenine-(43)-N(6))-methyltransferase (385 aa).

S-adenosyl-L-methionine-binding residues include Arg54, Gly83, Glu106, and Asn155.

This sequence belongs to the methyltransferase superfamily. METTL16/RlmF family.

The protein localises to the cytoplasm. It is found in the nucleus. The enzyme catalyses adenosine in U6 snRNA + S-adenosyl-L-methionine = N(6)-methyladenosine in U6 snRNA + S-adenosyl-L-homocysteine + H(+). RNA N6-methyltransferase that mediates N6-methylation of adenine of U6 small nuclear RNA (U6 snRNA). This Schizosaccharomyces pombe (strain 972 / ATCC 24843) (Fission yeast) protein is U6 small nuclear RNA (adenine-(43)-N(6))-methyltransferase.